Reading from the N-terminus, the 338-residue chain is Lipoate-protein ligase A (338 aa).

The BPL/LPL catalytic domain maps to 29-216 (PATQRVLFLW…AFFAHYGERV (188 aa)). ATP is bound by residues arginine 71, 76-79 (GAVF), and lysine 134. Lysine 134 serves as a coordination point for (R)-lipoate.

This sequence belongs to the LplA family. In terms of assembly, monomer.

The protein localises to the cytoplasm. The enzyme catalyses L-lysyl-[lipoyl-carrier protein] + (R)-lipoate + ATP = N(6)-[(R)-lipoyl]-L-lysyl-[lipoyl-carrier protein] + AMP + diphosphate + H(+). It participates in protein modification; protein lipoylation via exogenous pathway; protein N(6)-(lipoyl)lysine from lipoate: step 1/2. Its pathway is protein modification; protein lipoylation via exogenous pathway; protein N(6)-(lipoyl)lysine from lipoate: step 2/2. Functionally, catalyzes both the ATP-dependent activation of exogenously supplied lipoate to lipoyl-AMP and the transfer of the activated lipoyl onto the lipoyl domains of lipoate-dependent enzymes. This chain is Lipoate-protein ligase A, found in Escherichia coli O6:H1 (strain CFT073 / ATCC 700928 / UPEC).